We begin with the raw amino-acid sequence, 522 residues long: Sterol O-acyltransferase 2 (522 aa).

2 disordered regions span residues 1 to 36 (MEPGGARLRLQRTEGLGGERERQPCGDGNTETHRAP) and 74 to 96 (SYPSQDKPLPPPPPGSLSRTQEP). Over 1–120 (MEPGGARLRL…LDELMEVQHF (120 aa)) the chain is Cytoplasmic. Positions 17-36 (GGERERQPCGDGNTETHRAP) are enriched in basic and acidic residues. Residue H119 coordinates cholesterol. A helical membrane pass occupies residues 121 to 142 (RTIYHMFIAGLCVFIISTLAID). At 143–162 (FIDEGRLLLEFDLLIFSFGQ) the chain is on the lumenal side. Residues 163–188 (LPLALVTWVPMFLSTLLAPYQALRLW) form a helical membrane-spanning segment. Residues 189 to 196 (ARGTWTQA) lie on the Cytoplasmic side of the membrane. A helical transmembrane segment spans residues 197 to 220 (TGLGCALLAAHAVVLCALPVHVAV). Over 221 to 228 (EHQLPPAS) the chain is Lumenal. Residues 229 to 252 (RCVLVFEQVRFLMKSYSFLREAVP) traverse the membrane as a helical segment. Residues 253 to 293 (GTLRARRGEGIQAPSFSSYLYFLFCPTLIYRETYPRTPYVR) are Cytoplasmic-facing. C277 is modified (cysteine sulfenic acid (-SOH); alternate). A Glycyl cysteine thioester (Cys-Gly) (interchain with G-Cter in ubiquitin); alternate cross-link involves residue C277. Residues 294–326 (WNYVAKNFAQALGCVLYACFILGRLCVPVFANM) form a helical membrane-spanning segment. Residues 327–343 (SREPFSTRALVLSILHA) lie on the Lumenal side of the membrane. A helical membrane pass occupies residues 344 to 369 (TLPGIFMLLLIFFAFLHCWLNAFAEM). The Cytoplasmic portion of the chain corresponds to 370–417 (LRFGDRMFYRDWWNSTSFSNYYRTWNVVVHDWLYSYVYQDGLRLLGAR). Residues 377 to 383 (FYRDWWN) carry the FYXDWWN motif motif. N389, R392, N395, H399, Y407, and S430 together coordinate an acyl-CoA. A helical transmembrane segment spans residues 418 to 442 (ARGVAMLGVFLVSAVAHEYIFCFVL). Residue H434 is part of the active site. The Lumenal portion of the chain corresponds to 443–448 (GFFYPV). Residues 449–464 (MLILFLVIGGMLNFMM) form a helical membrane-spanning segment. Over 465–470 (HDQRTG) the chain is Cytoplasmic. The chain crosses the membrane as a helical span at residues 471-502 (PAWNVLMWTMLFLGQGIQVSLYCQEWYARRHC). At 503-522 (PLPQATFWGLVTPRSWSCHT) the chain is on the lumenal side.

It belongs to the membrane-bound acyltransferase family. Sterol o-acyltransferase subfamily. In terms of assembly, may form homo- or heterodimers. Interacts with INSIG1; the interaction is direct and promotes association with AMFR/gp78. Polyubiquitinated by AMFR/gp78 at Cys-277, leading to its degradation when the lipid levels are low. Association with AMFR/gp78 is mediated via interaction with INSIG1. High concentration of cholesterol and fatty acid results in Cys-277 oxidation, preventing ubiquitination at the same site, resulting in protein stabilization. In terms of processing, oxidized at Cys-277: high concentration of cholesterol and fatty acid induce reactive oxygen species, which oxidizes Cys-277, preventing ubiquitination at the same site, and resulting in protein stabilization. Expression seems confined in hepatocytes and enterocytes.

It is found in the endoplasmic reticulum membrane. It catalyses the reaction a sterol + a long-chain fatty acyl-CoA = a long-chain 3-hydroxysterol ester + CoA. The catalysed reaction is cholesterol + an acyl-CoA = a cholesterol ester + CoA. It carries out the reaction cholesterol + (9Z)-octadecenoyl-CoA = cholesteryl (9Z-octadecenoate) + CoA. The enzyme catalyses (5Z,8Z,11Z,14Z,17Z)-eicosapentaenoyl-CoA + cholesterol = (5Z,8Z,11Z,14Z,17Z-eicosapentaenoyl)-cholesterol + CoA. It catalyses the reaction (9Z,12Z,15Z)-octadecatrienoyl-CoA + cholesterol = (9Z,12Z,15Z-octadecatrienoyl)-cholesterol + CoA. The catalysed reaction is (5Z,8Z,11Z,14Z)-eicosatetraenoyl-CoA + cholesterol = cholesteryl (5Z,8Z,11Z,14Z)-eicosatetraenoate + CoA. Catalyzes the formation of fatty acid-cholesterol esters, which are less soluble in membranes than cholesterol. Plays a role in lipoprotein assembly and dietary cholesterol absorption. Utilizes oleoyl-CoA ((9Z)-octadecenoyl-CoA) and linolenoyl-CoA ((9Z,12Z,15Z)-octadecatrienoyl-CoA) as substrates. May provide cholesteryl esters for lipoprotein secretion from hepatocytes and intestinal mucosa. Functionally, has lower enzymatic activity compared to isoform 1. In Homo sapiens (Human), this protein is Sterol O-acyltransferase 2.